The chain runs to 161 residues: Nucleotide-binding protein Nmul_A1044 (161 aa).

Belongs to the YajQ family.

Functionally, nucleotide-binding protein. The polypeptide is Nucleotide-binding protein Nmul_A1044 (Nitrosospira multiformis (strain ATCC 25196 / NCIMB 11849 / C 71)).